Consider the following 141-residue polypeptide: Hemoglobin subunit alpha-A (141 aa).

The 141-residue stretch at 1–141 (VLSAADKTNV…VGAVLTAKYR (141 aa)) folds into the Globin domain. H58 contacts O2. H87 is a binding site for heme b.

The protein belongs to the globin family. In terms of assembly, heterotetramer of two alpha chains and two beta chains. Red blood cells.

Its function is as follows. Involved in oxygen transport from the lung to the various peripheral tissues. The chain is Hemoglobin subunit alpha-A (HBAA) from Cygnus olor (Mute swan).